The sequence spans 455 residues: Nuclear receptor subfamily 6 group A member 1-B (455 aa).

The segment at residues 38–113 (ERWCLICGDR…MGMNRKAIRE (76 aa)) is a DNA-binding region (nuclear receptor). 2 consecutive NR C4-type zinc fingers follow at residues 41 to 61 (CLICGDRASGLHYGIISCEGC) and 77 to 96 (CNRDKNCQMSRKQRNRCQYC). The segment at 145–173 (EGSDLSDSWSHGYSNHSSPGNSLSEGGQS) is disordered. The span at 149 to 165 (LSDSWSHGYSNHSSPGN) shows a compositional bias: polar residues. One can recognise an NR LBD domain in the interval 215–446 (QTHTLTGQIL…YSCTTNQNPW (232 aa)).

This sequence belongs to the nuclear hormone receptor family. NR6 subfamily. As to quaternary structure, homodimer.

It is found in the nucleus. In terms of biological role, probable orphan nuclear receptor. Binds to a response element containing repeats of the motif 5'-AGGTCA-3'. The chain is Nuclear receptor subfamily 6 group A member 1-B from Danio rerio (Zebrafish).